We begin with the raw amino-acid sequence, 348 residues long: Ileal sodium/bile acid cotransporter (348 aa).

Residues 1 to 28 lie on the Extracellular side of the membrane; it reads MDNSSVCPPNATVCEGDSCVVPESNFNA. Residues Asn-3 and Asn-10 are each glycosylated (N-linked (GlcNAc...) asparagine). The chain crosses the membrane as a helical span at residues 29 to 49; sequence ILNTVMSTVLTILLAMVMFSM. At 50-87 the chain is on the cytoplasmic side; it reads GCNVEVHKFLGHIKRPWGIFVGFLCQFGIMPLTGFILS. The chain crosses the membrane as a helical span at residues 88–108; that stretch reads VASGILPVQAVVVLIMGCCPG. Residues 109–126 are Extracellular-facing; it reads GTGSNILAYWIDGDMDLS. A helical transmembrane segment spans residues 127 to 147; that stretch reads VSMTTCSTLLALGMMPLCLFV. Over 148–157 the chain is Cytoplasmic; sequence YTKMWVDSGT. The chain crosses the membrane as a helical span at residues 158-178; the sequence is IVIPYDSIGISLVALVIPVSF. Residues 179 to 195 lie on the Extracellular side of the membrane; it reads GMFVNHKWPQKAKIILK. A helical transmembrane segment spans residues 196–216; that stretch reads IGSITGVILIVLIAVIGGILY. At 217–224 the chain is on the cytoplasmic side; sequence QSAWIIEP. A helical membrane pass occupies residues 225–245; sequence KLWIIGTIFPIAGYSLGFFLA. The Extracellular segment spans residues 246–284; the sequence is RLAGQPWYRCRTVALETGMQNTQLCSTIVQLSFSPEDLN. Residues 285-305 traverse the membrane as a helical segment; it reads LVFTFPLIYTVFQLVFAAVIL. At 306–348 the chain is on the cytoplasmic side; the sequence is GIYVTYRKCYGKNDAEFLEKTDNEMDSRPSFDETNKGFQPDEK. The disordered stretch occupies residues 328 to 348; it reads NEMDSRPSFDETNKGFQPDEK. At Ser-335 the chain carries Phosphoserine.

Belongs to the bile acid:sodium symporter (BASS) (TC 2.A.28) family. Monomer and homodimer. Expressed in ileum.

It localises to the membrane. The catalysed reaction is taurocholate(out) + 2 Na(+)(out) = taurocholate(in) + 2 Na(+)(in). It catalyses the reaction cholate(out) + 2 Na(+)(out) = cholate(in) + 2 Na(+)(in). It carries out the reaction taurochenodeoxycholate(out) + 2 Na(+)(out) = taurochenodeoxycholate(in) + 2 Na(+)(in). The enzyme catalyses tauroursodeoxycholate(out) + 2 Na(+)(out) = tauroursodeoxycholate(in) + 2 Na(+)(in). The catalysed reaction is glycocholate(out) + 2 Na(+)(out) = glycocholate(in) + 2 Na(+)(in). It catalyses the reaction tauronorcholate(out) + 2 Na(+)(out) = tauronorcholate(in) + 2 Na(+)(in). It carries out the reaction tauroallocholate(out) + 2 Na(+)(out) = tauroallocholate(in) + 2 Na(+)(in). The enzyme catalyses taurodeoxycholate(out) + 2 Na(+)(out) = taurodeoxycholate(in) + 2 Na(+)(in). The catalysed reaction is tauro-beta-muricholate(out) + 2 Na(+)(out) = tauro-beta-muricholate(in) + 2 Na(+)(in). Plays a critical role in the sodium-dependent reabsorption of bile acids from the lumen of the small intestine. Transports various bile acids, unconjugated or conjugated, such as cholate and taurocholate. Also responsible for bile acid transport in the renal proximal tubules, a salvage mechanism that helps conserve bile acids. Works collaboratively with the Na(+)-taurocholate cotransporting polypeptide (NTCP), the organic solute transporter (OST), and the bile salt export pump (BSEP), to ensure efficacious biological recycling of bile acids during enterohepatic circulation. The polypeptide is Ileal sodium/bile acid cotransporter (Slc10a2) (Mus musculus (Mouse)).